The following is a 362-amino-acid chain: E3 ubiquitin-protein ligase TM129 (362 aa).

Topologically, residues 1–6 (MDSPEV) are lumenal. Residues 7 to 27 (TFTLAYLVFAVCFVFTPNEFY) traverse the membrane as a helical segment. Topologically, residues 28–56 (SAGLTVQNLLSGWLGSEDAAFVPYHLRRT) are cytoplasmic. The helical transmembrane segment at 57 to 77 (SATLLCHSLLPLGYYMGMCFA) threads the bilayer. Residues 78–94 (ASEKQLYSPGQAPEAWQ) are Lumenal-facing. Residues 95–115 (LFLLLAVTLPLLSCTLIYYWS) form a helical membrane-spanning segment. Residues 116 to 362 (WDRWTRHPLA…FCILDVCCVR (247 aa)) lie on the Cytoplasmic side of the membrane. The RING-type; degenerate zinc-finger motif lies at 285–350 (CIGCMQTRAS…ASRVPCPTCR (66 aa)).

This sequence belongs to the TMEM129 family. In terms of assembly, integral component of ER-resident dislocation complexes.

It is found in the endoplasmic reticulum membrane. It carries out the reaction S-ubiquitinyl-[E2 ubiquitin-conjugating enzyme]-L-cysteine + [acceptor protein]-L-lysine = [E2 ubiquitin-conjugating enzyme]-L-cysteine + N(6)-ubiquitinyl-[acceptor protein]-L-lysine.. Its pathway is protein modification; protein ubiquitination. Its function is as follows. E3 ubiquitin-protein ligase involved in ER-associated protein degradation, preferentially associates with the E2 enzyme UBE2J2. Exploited by viral US11 proteins to mediate HLA class I proteins degradation. The polypeptide is E3 ubiquitin-protein ligase TM129 (Tmem129) (Mus musculus (Mouse)).